Reading from the N-terminus, the 2429-residue chain is Reducing polyketide synthase ppsB (2429 aa).

The 439-residue stretch at 4 to 442 (DERVAIIGTG…GTNAHAILES (439 aa)) folds into the Ketosynthase family 3 (KS3) domain. Active-site for beta-ketoacyl synthase activity residues include Cys-177, His-317, and His-362. The malonyl-CoA:ACP transacylase (MAT) domain stretch occupies residues 558–873 (VFTGQGAQWP…PYIGLAHRGE (316 aa)). Residue Ser-652 is the For acyl/malonyl transferase activity of the active site. The tract at residues 945–1075 (HPLLGVLSSE…GRVILALGEA (131 aa)) is N-terminal hotdog fold. Positions 945-1227 (HPLLGVLSSE…QLEGIHLTLS (283 aa)) are product template (PT) domain. The region spanning 945–1233 (HPLLGVLSSE…LTLSKPKNSS (289 aa)) is the PKS/mFAS DH domain. Residues 1090–1233 (SYPMNVDKFY…LTLSKPKNSS (144 aa)) form a C-terminal hotdog fold region. Residues 1409–2158 (LEVGAGTGSA…ISDLYDQLTS (750 aa)) form a methyltransferase (CMeT) domain region. One can recognise a Carrier domain in the interval 2350–2425 (EIILQLFKEK…SMVDEVVKRR (76 aa)). An O-(pantetheine 4'-phosphoryl)serine modification is found at Ser-2385.

It participates in secondary metabolite biosynthesis. Its function is as follows. Reducing polyketide synthase; part of the gene cluster that mediates the biosynthesis of 2,4'-dihydroxy-3'-methoxypropiophenone. The first step of the pathway is the conversion of acetate into acetyl-CoA by the acyl-CoA ligase ppsA. Acetyl-CoA is then used as a starter unit by the polyketide synthase ppsB and condensed with 4 malonyl-CoA unit to produce the pentaketide backbone. During polyketide extension, the polykedite chain is probably reduced and dehydrated by the KR and PT domains, respectively. O-methylation seems to be catalyzed by an unknown methyltransferase rather than by the CMeT domain of ppsB. Two hydroxylations and one further decarboxylation step catalyzed by yet unknown enzymes are then required to yield 4'-hydroxy-3'-methoxypropiophenone. PpsC functions as a carrier protein to transport 4'-hydroxy-3'-methoxypropiophenone to a specific cell compartment in which 4'-hydroxy-3'-methoxypropiophenone is hydroxylated to 2,4'-dihydroxy-3'-methoxypropiophenone by a still to be identified enzyme. This Aspergillus oryzae (strain ATCC 42149 / RIB 40) (Yellow koji mold) protein is Reducing polyketide synthase ppsB.